A 217-amino-acid chain; its full sequence is Cytochrome b5 domain-containing protein 1 (217 aa).

Residues 6–72 enclose the Cytochrome b5 heme-binding domain; the sequence is PRFYTPREVS…NPKTGDVKTH (67 aa). Heme is bound by residues His41 and His72.

The protein belongs to the cytochrome b5 family.

The protein localises to the cytoplasm. It is found in the cytoskeleton. It localises to the cilium axoneme. Its function is as follows. Radial spoke stalk protein that binds heme under oxidizing conditions. Required for the coordinated beating of multiple cilia maybe by functioning in a redox signaling pathway. The sequence is that of Cytochrome b5 domain-containing protein 1 (cyb5d1) from Xenopus tropicalis (Western clawed frog).